The primary structure comprises 309 residues: Porphobilinogen deaminase (309 aa).

Residue Cys-241 is modified to S-(dipyrrolylmethanemethyl)cysteine.

The protein belongs to the HMBS family. As to quaternary structure, monomer. Requires dipyrromethane as cofactor.

It catalyses the reaction 4 porphobilinogen + H2O = hydroxymethylbilane + 4 NH4(+). It functions in the pathway porphyrin-containing compound metabolism; protoporphyrin-IX biosynthesis; coproporphyrinogen-III from 5-aminolevulinate: step 2/4. Tetrapolymerization of the monopyrrole PBG into the hydroxymethylbilane pre-uroporphyrinogen in several discrete steps. The polypeptide is Porphobilinogen deaminase (Bacillus thuringiensis subsp. konkukian (strain 97-27)).